The primary structure comprises 1631 residues: ABC transporter A family member 6 (1631 aa).

7 helical membrane-spanning segments follow: residues isoleucine 25–leucine 45, serine 242–isoleucine 262, serine 285–phenylalanine 305, glycine 317–phenylalanine 337, phenylalanine 346–serine 366, valine 372–isoleucine 392, and isoleucine 416–valine 436. The ABC transporter 1 domain maps to isoleucine 491–asparagine 724. Glycine 527 to serine 534 contributes to the ATP binding site. 7 consecutive transmembrane segments (helical) span residues serine 866 to lysine 886, alanine 1047 to alanine 1067, tryptophan 1099 to isoleucine 1119, phenylalanine 1127 to leucine 1147, alanine 1158 to leucine 1178, isoleucine 1198 to isoleucine 1218, and leucine 1242 to leucine 1262. One can recognise an ABC transporter 2 domain in the interval isoleucine 1309–lysine 1544. Residue glycine 1347 to serine 1354 participates in ATP binding.

Belongs to the ABC transporter superfamily. ABCA family.

The protein resides in the membrane. The polypeptide is ABC transporter A family member 6 (abcA6) (Dictyostelium discoideum (Social amoeba)).